A 131-amino-acid chain; its full sequence is Ponticulin-like protein M (131 aa).

Residues methionine 1–glycine 19 form the signal peptide. Serine 106 is lipidated: GPI-like-anchor amidated serine. The propeptide at asparagine 107 to leucine 131 is removed in mature form.

Belongs to the ponticulin family. The GPI-like-anchor contains a phosphoceramide group, rather than a phosphatidyl group.

The protein localises to the cell membrane. In terms of biological role, binds F-actin and nucleates actin assembly. The polypeptide is Ponticulin-like protein M (ponM) (Dictyostelium discoideum (Social amoeba)).